We begin with the raw amino-acid sequence, 391 residues long: Formate-dependent phosphoribosylglycinamide formyltransferase (391 aa).

N(1)-(5-phospho-beta-D-ribosyl)glycinamide-binding positions include 18–19 (EL) and E78. ATP is bound by residues R110, K151, 156 to 161 (SSGKGQ), 191 to 194 (EEFI), and E199. Residues 115–305 (DLASKDLKIK…EFELHLRAFL (191 aa)) form the ATP-grasp domain. Mg(2+)-binding residues include E264 and E276. N(1)-(5-phospho-beta-D-ribosyl)glycinamide contacts are provided by residues D283, K353, and 360–361 (RR).

Belongs to the PurK/PurT family. Homodimer.

It catalyses the reaction N(1)-(5-phospho-beta-D-ribosyl)glycinamide + formate + ATP = N(2)-formyl-N(1)-(5-phospho-beta-D-ribosyl)glycinamide + ADP + phosphate + H(+). Its pathway is purine metabolism; IMP biosynthesis via de novo pathway; N(2)-formyl-N(1)-(5-phospho-D-ribosyl)glycinamide from N(1)-(5-phospho-D-ribosyl)glycinamide (formate route): step 1/1. In terms of biological role, involved in the de novo purine biosynthesis. Catalyzes the transfer of formate to 5-phospho-ribosyl-glycinamide (GAR), producing 5-phospho-ribosyl-N-formylglycinamide (FGAR). Formate is provided by PurU via hydrolysis of 10-formyl-tetrahydrofolate. The polypeptide is Formate-dependent phosphoribosylglycinamide formyltransferase (Prochlorococcus marinus (strain MIT 9301)).